The chain runs to 178 residues: Heavy metal-associated isoprenylated plant protein 30 (178 aa).

The region spanning 45–108 (LQTIDLKVRM…AVRRAGKRAE (64 aa)) is the HMA domain. The a metal cation site is built by cysteine 56 and cysteine 59. At cysteine 175 the chain carries Cysteine methyl ester. Cysteine 175 carries the S-farnesyl cysteine lipid modification. Positions 176-178 (SLM) are cleaved as a propeptide — removed in mature form.

This sequence belongs to the HIPP family. Interacts with ZHD3/HB21, ZHD11/HB29 and ZHD8/HB30.

Functionally, heavy-metal-binding protein. In Arabidopsis thaliana (Mouse-ear cress), this protein is Heavy metal-associated isoprenylated plant protein 30.